A 457-amino-acid chain; its full sequence is Bifunctional protein GlmU (457 aa).

Residues 1–229 form a pyrophosphorylase region; it reads MSNSAKSVVI…HSEMEGVNNR (229 aa). Residues 11–14, Lys25, Gln76, 81–82, 103–105, Gly140, Glu154, Asn169, and Asn227 contribute to the UDP-N-acetyl-alpha-D-glucosamine site; these read LAAG, GT, and YGD. Asp105 is a Mg(2+) binding site. Position 227 (Asn227) interacts with Mg(2+). The tract at residues 230–250 is linker; sequence LQLAALERIYQTEQAERLLLE. The interval 251–457 is N-acetyltransferase; the sequence is GVMLLDPARF…GWKRPVKKKQ (207 aa). 2 residues coordinate UDP-N-acetyl-alpha-D-glucosamine: Arg333 and Lys351. Catalysis depends on His363, which acts as the Proton acceptor. Residues Tyr366 and Asn377 each contribute to the UDP-N-acetyl-alpha-D-glucosamine site. Acetyl-CoA contacts are provided by residues Ala380, 386-387, Ser405, Ala423, and Arg440; that span reads NY.

The protein in the N-terminal section; belongs to the N-acetylglucosamine-1-phosphate uridyltransferase family. This sequence in the C-terminal section; belongs to the transferase hexapeptide repeat family. In terms of assembly, homotrimer. Mg(2+) serves as cofactor.

It localises to the cytoplasm. The enzyme catalyses alpha-D-glucosamine 1-phosphate + acetyl-CoA = N-acetyl-alpha-D-glucosamine 1-phosphate + CoA + H(+). The catalysed reaction is N-acetyl-alpha-D-glucosamine 1-phosphate + UTP + H(+) = UDP-N-acetyl-alpha-D-glucosamine + diphosphate. It participates in nucleotide-sugar biosynthesis; UDP-N-acetyl-alpha-D-glucosamine biosynthesis; N-acetyl-alpha-D-glucosamine 1-phosphate from alpha-D-glucosamine 6-phosphate (route II): step 2/2. It functions in the pathway nucleotide-sugar biosynthesis; UDP-N-acetyl-alpha-D-glucosamine biosynthesis; UDP-N-acetyl-alpha-D-glucosamine from N-acetyl-alpha-D-glucosamine 1-phosphate: step 1/1. The protein operates within bacterial outer membrane biogenesis; LPS lipid A biosynthesis. Catalyzes the last two sequential reactions in the de novo biosynthetic pathway for UDP-N-acetylglucosamine (UDP-GlcNAc). The C-terminal domain catalyzes the transfer of acetyl group from acetyl coenzyme A to glucosamine-1-phosphate (GlcN-1-P) to produce N-acetylglucosamine-1-phosphate (GlcNAc-1-P), which is converted into UDP-GlcNAc by the transfer of uridine 5-monophosphate (from uridine 5-triphosphate), a reaction catalyzed by the N-terminal domain. The protein is Bifunctional protein GlmU of Proteus mirabilis (strain HI4320).